The following is a 280-amino-acid chain: MIQFVIPSYQRVGAVSALDMFPTDYEPHIVVREHEEKAYNDAYGSRAKIITIPDGVNGIAGTRKAITDMYAGQRIWMIDDDTTIRMSSMRKRDDRRCVDKVNQLTHEQFYELIQYVEDAMDCGYYHGHARLPIFKITSSWGNYRENSYGFTNTWYDLGKLTTEQIGYGKIDLCEDMYAFLNLINQGYPHLALFKYLVVSGKAQAPGGCSSIRSNSKHNRALEQINREFPEQARWKTSNIEKRKSLGEEDEPLKVLRMCVSRKEKSEAFHKFNAIHPIAVD.

Its pathway is genetic information processing; DNA modification. Its function is as follows. Transfers a gentiobiosyl-group on a hydroxymethylcytosine residue in DNA. Is involved in a DNA modification process to protects the phage genome against its own nucleases and the host restriction endonuclease system. The polypeptide is Beta-glucosyl-HMC-alpha-glucosyl-transferase (Enterobacteria phage T6 (Bacteriophage T6)).